The chain runs to 362 residues: D-alanine--D-alanine ligase (362 aa).

The region spanning 141–346 (KNIFAEAGLN…YPELIEELIR (206 aa)) is the ATP-grasp domain. 174–229 (EEALGYPCFVKPANLGSSVGINKCKDREELEKAFEEAFQFDRKIIVEENIIGREVE) lines the ATP pocket. Mg(2+) contacts are provided by aspartate 300, glutamate 313, and asparagine 315.

It belongs to the D-alanine--D-alanine ligase family. The cofactor is Mg(2+). Mn(2+) serves as cofactor.

It is found in the cytoplasm. It catalyses the reaction 2 D-alanine + ATP = D-alanyl-D-alanine + ADP + phosphate + H(+). It functions in the pathway cell wall biogenesis; peptidoglycan biosynthesis. Its function is as follows. Cell wall formation. The polypeptide is D-alanine--D-alanine ligase (Bacillus cytotoxicus (strain DSM 22905 / CIP 110041 / 391-98 / NVH 391-98)).